A 123-amino-acid chain; its full sequence is Zinc metalloproteinase-disintegrin-like jerdohagin (123 aa).

Residues 6–52 (RYLYIRHDREACTCHANSCIMSAYFSNSHVQYENYINDCKPQCILNE) enclose the Peptidase M12B domain. Residue histidine 12 coordinates Zn(2+). A disulfide bridge connects residues cysteine 19 and cysteine 24. Positions 48 and 51 each coordinate Ca(2+). The region spanning 53–80 (LHSWVECESGECCEQCRSECDIAESCTN) is the Disintegrin domain. 4 cysteine pairs are disulfide-bonded: cysteine 59–cysteine 65, cysteine 64–cysteine 78, cysteine 72–cysteine 90, and cysteine 106–cysteine 116. The D/ECD-tripeptide signature appears at 71 to 73 (ECD).

It belongs to the venom metalloproteinase (M12B) family. P-III subfamily. P-IIIa sub-subfamily. Monomer. The cofactor is Zn(2+). Post-translationally, the N-terminus is blocked. As to expression, expressed by the venom gland.

Its subcellular location is the secreted. Its activity is regulated as follows. Its proteolytic and hemorrhagic activities are inhibited by EDTA, but not by PMSF. Functionally, snake venom metalloproteinase that has high hemorrhagic activity and degrades the alpha-chain of fibrinogen (FGA), leaving the beta- and the gamma-chain intact. It may also inhibit platelet aggregation. Cleaves insulin B chain at '25-Phe-|-Val-26', '26-Val-|-Asn-27', '29-His-|-Leu-30', '30-Leu-|-Cys-31', '33-Ser-|-His-34', '35-Leu-|-Val-36', '40-Tyr-|-Leu-41', '41-Leu-|-Val-42', '42-Val-|-Cys-43', '43-Cys-|-Gly-44', '44-Gly-|-Glu-45', '46-Arg-|-Gly-47', '47-Gly-|-Phe-48', '49-Phe-|-Tyr-50' and '52-Pro-|-Lys-53' bonds. Also cleaves human prothrombin (72 kDa) and activation fragment F1 (27 kDa) of activated human prothrombin, to generate two new proteins of 68 and 23 kDa. The protein is Zinc metalloproteinase-disintegrin-like jerdohagin of Protobothrops jerdonii (Jerdon's pitviper).